A 107-amino-acid polypeptide reads, in one-letter code: Phosphoribosyl-ATP pyrophosphatase (107 aa).

Belongs to the PRA-PH family.

Its subcellular location is the cytoplasm. It catalyses the reaction 1-(5-phospho-beta-D-ribosyl)-ATP + H2O = 1-(5-phospho-beta-D-ribosyl)-5'-AMP + diphosphate + H(+). It participates in amino-acid biosynthesis; L-histidine biosynthesis; L-histidine from 5-phospho-alpha-D-ribose 1-diphosphate: step 2/9. The sequence is that of Phosphoribosyl-ATP pyrophosphatase from Bacillus cereus (strain ATCC 14579 / DSM 31 / CCUG 7414 / JCM 2152 / NBRC 15305 / NCIMB 9373 / NCTC 2599 / NRRL B-3711).